The primary structure comprises 403 residues: Arginine biosynthesis bifunctional protein ArgJ (403 aa).

Substrate contacts are provided by Thr151, Lys177, Thr188, Glu275, Asn398, and Ser403. Thr188 serves as the catalytic Nucleophile.

Belongs to the ArgJ family. Heterotetramer of two alpha and two beta chains.

The protein localises to the cytoplasm. The catalysed reaction is N(2)-acetyl-L-ornithine + L-glutamate = N-acetyl-L-glutamate + L-ornithine. The enzyme catalyses L-glutamate + acetyl-CoA = N-acetyl-L-glutamate + CoA + H(+). It participates in amino-acid biosynthesis; L-arginine biosynthesis; L-ornithine and N-acetyl-L-glutamate from L-glutamate and N(2)-acetyl-L-ornithine (cyclic): step 1/1. The protein operates within amino-acid biosynthesis; L-arginine biosynthesis; N(2)-acetyl-L-ornithine from L-glutamate: step 1/4. Its function is as follows. Catalyzes two activities which are involved in the cyclic version of arginine biosynthesis: the synthesis of N-acetylglutamate from glutamate and acetyl-CoA as the acetyl donor, and of ornithine by transacetylation between N(2)-acetylornithine and glutamate. The sequence is that of Arginine biosynthesis bifunctional protein ArgJ from Caulobacter vibrioides (strain ATCC 19089 / CIP 103742 / CB 15) (Caulobacter crescentus).